The primary structure comprises 311 residues: Olfactory receptor 52J3 (311 aa).

Residues 1–27 (MFYHNKSIFHPVTFFLIGIPGLEDFHM) are Extracellular-facing. A glycan (N-linked (GlcNAc...) asparagine) is linked at Asn-5. Residues 28–48 (WISGPFCSVYLVALLGNATIL) form a helical membrane-spanning segment. The Cytoplasmic portion of the chain corresponds to 49–56 (LVIKVEQT). A helical membrane pass occupies residues 57-77 (LREPMFYFLAILSTIDLALST). The Extracellular portion of the chain corresponds to 78–101 (TSVPRMLGIFWFDAHEINYGACVA). Cys-99 and Cys-191 are joined by a disulfide. A helical membrane pass occupies residues 102–122 (QMFLIHAFTGMEAEVLLAMAF). Over 123-141 (DRYVAVCAPLHYATILTSQ) the chain is Cytoplasmic. Residues 142–162 (VLVGISMCIVIRPVLLTLPMV) traverse the membrane as a helical segment. Topologically, residues 163–198 (YLIYRLPFCQAHIIAHSYCEHMGIAKLSCGNIRING) are extracellular. A helical transmembrane segment spans residues 199–218 (IYGLFVVSFFVLNLVLIGIS). Residues 219 to 238 (YVYILRAVFRLPSHDAQLKA) are Cytoplasmic-facing. Residues 239–259 (LSTCGAHVGVICVFYIPSVFS) form a helical membrane-spanning segment. Topologically, residues 260–274 (FLTHRFGHQIPGYIH) are extracellular. A helical transmembrane segment spans residues 275 to 295 (ILVANLYLIIPPSLNPIIYGV). Residues 296 to 311 (RTKQIRERVLYVFTKK) are Cytoplasmic-facing.

It belongs to the G-protein coupled receptor 1 family.

It is found in the cell membrane. Functionally, odorant receptor. The sequence is that of Olfactory receptor 52J3 (OR52J3) from Homo sapiens (Human).